A 464-amino-acid polypeptide reads, in one-letter code: ATP-dependent protease ATPase subunit HslU (464 aa).

Residues Val18, 60–65 (GVGKTE), Asp277, Glu342, and Arg414 each bind ATP.

This sequence belongs to the ClpX chaperone family. HslU subfamily. A double ring-shaped homohexamer of HslV is capped on each side by a ring-shaped HslU homohexamer. The assembly of the HslU/HslV complex is dependent on binding of ATP.

Its subcellular location is the cytoplasm. ATPase subunit of a proteasome-like degradation complex; this subunit has chaperone activity. The binding of ATP and its subsequent hydrolysis by HslU are essential for unfolding of protein substrates subsequently hydrolyzed by HslV. HslU recognizes the N-terminal part of its protein substrates and unfolds these before they are guided to HslV for hydrolysis. The protein is ATP-dependent protease ATPase subunit HslU of Lactobacillus delbrueckii subsp. bulgaricus (strain ATCC BAA-365 / Lb-18).